Consider the following 575-residue polypeptide: Urease subunit alpha (575 aa).

The region spanning 138-575 (GAVDCHVHLI…LPMTQRYFLF (438 aa)) is the Urease domain. Residues histidine 143, histidine 145, and lysine 226 each contribute to the Ni(2+) site. Residue lysine 226 is modified to N6-carboxylysine. Histidine 228 provides a ligand contact to substrate. Histidine 255 and histidine 281 together coordinate Ni(2+). The active-site Proton donor is histidine 329. Aspartate 369 is a Ni(2+) binding site.

It belongs to the metallo-dependent hydrolases superfamily. Urease alpha subunit family. Heterotrimer of UreA (gamma), UreB (beta) and UreC (alpha) subunits. Three heterotrimers associate to form the active enzyme. It depends on Ni cation as a cofactor. Post-translationally, carboxylation allows a single lysine to coordinate two nickel ions.

The protein resides in the cytoplasm. It catalyses the reaction urea + 2 H2O + H(+) = hydrogencarbonate + 2 NH4(+). It participates in nitrogen metabolism; urea degradation; CO(2) and NH(3) from urea (urease route): step 1/1. The polypeptide is Urease subunit alpha (Frankia casuarinae (strain DSM 45818 / CECT 9043 / HFP020203 / CcI3)).